We begin with the raw amino-acid sequence, 103 residues long: Cell division protein FtsB (103 aa).

Residues 1-3 lie on the Cytoplasmic side of the membrane; it reads MGK. A helical transmembrane segment spans residues 4 to 21; the sequence is LTLLLLAILVWLQYSLWF. Topologically, residues 22–103 are periplasmic; that stretch reads GKNGIHDYTR…RAQSAGQNNR (82 aa). Residues 31-71 adopt a coiled-coil conformation; it reads RVNDDVAAQQATNAKLKARNDQLFAEIDDLNGGQEALEERA.

This sequence belongs to the FtsB family. In terms of assembly, part of a complex composed of FtsB, FtsL and FtsQ.

Its subcellular location is the cell inner membrane. In terms of biological role, essential cell division protein. May link together the upstream cell division proteins, which are predominantly cytoplasmic, with the downstream cell division proteins, which are predominantly periplasmic. In Escherichia coli O157:H7, this protein is Cell division protein FtsB.